A 653-amino-acid chain; its full sequence is Beta-galactosidase (653 aa).

Residues 1-22 (MPGVVRLLALLLVPLLLGSARG) form the signal peptide. Positions 23-27 (LHNAT) are excised as a propeptide. The N-linked (GlcNAc...) asparagine glycan is linked to Asn25. Position 82 (Tyr82) interacts with substrate. N-linked (GlcNAc...) asparagine glycosylation occurs at Asn96. Residues Glu128 and Asn186 each contribute to the substrate site. Residue Glu187 is the Proton donor of the active site. A disulfide bridge connects residues Cys194 and Cys229. The N-linked (GlcNAc...) asparagine glycan is linked to Asn246. Glu267 serves as the catalytic Nucleophile. Position 332 (Tyr332) interacts with substrate. 3 N-linked (GlcNAc...) asparagine glycosylation sites follow: Asn463, Asn497, and Asn554. An intrachain disulfide couples Cys625 to Cys633.

The protein belongs to the glycosyl hydrolase 35 family. As to quaternary structure, homodimer. May form higher multimers.

Its subcellular location is the lysosome. It catalyses the reaction Hydrolysis of terminal non-reducing beta-D-galactose residues in beta-D-galactosides.. Cleaves beta-linked terminal galactosyl residues from gangliosides, glycoproteins, and glycosaminoglycans. This Bos taurus (Bovine) protein is Beta-galactosidase (GLB1).